The chain runs to 135 residues: Small ribosomal subunit protein bS16 (135 aa).

This sequence belongs to the bacterial ribosomal protein bS16 family.

The polypeptide is Small ribosomal subunit protein bS16 (Prosthecochloris aestuarii (strain DSM 271 / SK 413)).